Reading from the N-terminus, the 88-residue chain is Small ribosomal subunit protein bS16c (88 aa).

Belongs to the bacterial ribosomal protein bS16 family.

The protein localises to the plastid. The protein resides in the chloroplast. The polypeptide is Small ribosomal subunit protein bS16c (Solanum bulbocastanum (Wild potato)).